Consider the following 321-residue polypeptide: Acetyl-coenzyme A carboxylase carboxyl transferase subunit alpha (321 aa).

The CoA carboxyltransferase C-terminal domain maps to 39-293; it reads RLEVKSQALT…KRALAEALRQ (255 aa).

This sequence belongs to the AccA family. Acetyl-CoA carboxylase is a heterohexamer composed of biotin carboxyl carrier protein (AccB), biotin carboxylase (AccC) and two subunits each of ACCase subunit alpha (AccA) and ACCase subunit beta (AccD).

The protein localises to the cytoplasm. The catalysed reaction is N(6)-carboxybiotinyl-L-lysyl-[protein] + acetyl-CoA = N(6)-biotinyl-L-lysyl-[protein] + malonyl-CoA. Its pathway is lipid metabolism; malonyl-CoA biosynthesis; malonyl-CoA from acetyl-CoA: step 1/1. In terms of biological role, component of the acetyl coenzyme A carboxylase (ACC) complex. First, biotin carboxylase catalyzes the carboxylation of biotin on its carrier protein (BCCP) and then the CO(2) group is transferred by the carboxyltransferase to acetyl-CoA to form malonyl-CoA. In Azoarcus sp. (strain BH72), this protein is Acetyl-coenzyme A carboxylase carboxyl transferase subunit alpha.